The sequence spans 479 residues: UDP-glucose flavonoid 3-O-glucosyltransferase 6 (479 aa).

Residue H17 is the Proton acceptor of the active site. H17 is an an anthocyanidin binding site. D121 serves as the catalytic Charge relay. Residues T143, A354, Q356, H371, W374, N375, S376, and E379 each contribute to the UDP-alpha-D-glucose site. A394 contacts an anthocyanidin. Residues E395 and Q396 each contribute to the UDP-alpha-D-glucose site. Positions 454 to 479 (MSRKALEEDGSSYSSLGRFLDQIQTS) are disordered.

It belongs to the UDP-glycosyltransferase family. As to expression, strongly expressed in achenes, with lower expression levels detected in receptacles.

The catalysed reaction is a flavonol + UDP-alpha-D-glucose = a flavonol 3-O-beta-D-glucoside + UDP + H(+). Functionally, broad spectrum multifunctional glucosyltransferase. Catalyzes the formation of flavonol 3-O-glucosides during fruit ripening. Accepted substrates include several flavonoids, hydroxycoumarins and beta-naphthols. Uses UDP-Glc as a sugar donor, but not UDP-Gal or UDP-GlcUA. May also be involved in detoxification of xenobiotics. This Fragaria ananassa (Strawberry) protein is UDP-glucose flavonoid 3-O-glucosyltransferase 6.